We begin with the raw amino-acid sequence, 442 residues long: tRNA(Ile)-lysidine synthase (442 aa).

Position 27–32 (27–32 (SGGLDS)) interacts with ATP.

Belongs to the tRNA(Ile)-lysidine synthase family.

Its subcellular location is the cytoplasm. The enzyme catalyses cytidine(34) in tRNA(Ile2) + L-lysine + ATP = lysidine(34) in tRNA(Ile2) + AMP + diphosphate + H(+). In terms of biological role, ligates lysine onto the cytidine present at position 34 of the AUA codon-specific tRNA(Ile) that contains the anticodon CAU, in an ATP-dependent manner. Cytidine is converted to lysidine, thus changing the amino acid specificity of the tRNA from methionine to isoleucine. This Photorhabdus laumondii subsp. laumondii (strain DSM 15139 / CIP 105565 / TT01) (Photorhabdus luminescens subsp. laumondii) protein is tRNA(Ile)-lysidine synthase.